Reading from the N-terminus, the 76-residue chain is Protein CYSTEINE-RICH TRANSMEMBRANE MODULE 11 (76 aa).

The tract at residues 19–45 (GPPPPVGVPPQYYPPPPPPPPPPPPPR) is disordered. The chain crosses the membrane as a helical span at residues 47–63 (VGFLEGLLAALCCCCLV).

Belongs to the CYSTM1 family. In terms of assembly, heterodimers. Interacts with CYSTM6, CYSTM7 and WIH1/CYSTM13. Mostly expressed in stems, siliques, leaves and flowers and, to a lower extent, in roots.

Its subcellular location is the cell membrane. It is found in the cytoplasm. Involved in resistance to abiotic stress. The protein is Protein CYSTEINE-RICH TRANSMEMBRANE MODULE 11 of Arabidopsis thaliana (Mouse-ear cress).